Reading from the N-terminus, the 4516-residue chain is Dynein axonemal heavy chain 1 (4516 aa).

The stem stretch occupies residues 1 to 1748 (MVTLSISDTL…YIRAVNAEFI (1748 aa)). The segment at 78–160 (SSGSDKSLKN…RKSPLAGTDK (83 aa)) is disordered. 2 stretches are compositionally biased toward basic and acidic residues: residues 83-97 (KSLKNGMEECDKEEA) and 113-129 (ENHDLEKMLKESSRNPE). AAA stretches follow at residues 1749–1956 (YGYE…VISA), 2016–2249 (QAIR…TTVK), 2422–2682 (TMMP…VFQG), and 2780–2972 (DYNQ…CCTI). Positions 1787-1794 (GPAGTGKT) match the GPAGTGKT motif motif. Position 1787-1794 (1787-1794 (GPAGTGKT)) interacts with ATP. A CFDEFNR motif motif is present at residues 1837 to 1843 (CFDEFNR). Residues 2054-2061 (GPTGSGKS), 2460-2467 (GPTGTGKT), and 2819-2826 (GVGGSGRS) each bind ATP. The tract at residues 2987-3285 (ATRFLHEIPE…MHKYHFVAKA (299 aa)) is stalk. The stretch at 3293–3394 (LREAQDDLEV…QDTVENLENM (102 aa)) forms a coiled coil. AAA regions lie at residues 3388-3618 (VENL…EERP) and 3831-4050 (LPAF…SYNS).

Belongs to the dynein heavy chain family. In terms of assembly, consists of at least two heavy chains and a number of intermediate and light chains. Expressed in brain.

It is found in the cytoplasm. The protein localises to the cytoskeleton. The protein resides in the cilium axoneme. It localises to the cell projection. Its subcellular location is the cilium. It is found in the flagellum. Force generating protein of cilia required for sperm flagellum motility. Produces force towards the minus ends of microtubules. Dynein has ATPase activity; the force-producing power stroke is thought to occur on release of ADP. Required in spermatozoa for the formation of the inner dynein arms and biogenesis of the axoneme. In Rattus norvegicus (Rat), this protein is Dynein axonemal heavy chain 1.